The chain runs to 361 residues: tRNA 2-selenouridine synthase (361 aa).

Residues 14-137 (LIADTPIIDV…LRQTAIQATI (124 aa)) enclose the Rhodanese domain. Cys-97 functions as the S-selanylcysteine intermediate in the catalytic mechanism.

It belongs to the SelU family. As to quaternary structure, monomer.

It catalyses the reaction 5-methylaminomethyl-2-thiouridine(34) in tRNA + selenophosphate + (2E)-geranyl diphosphate + H2O + H(+) = 5-methylaminomethyl-2-selenouridine(34) in tRNA + (2E)-thiogeraniol + phosphate + diphosphate. The catalysed reaction is 5-methylaminomethyl-2-thiouridine(34) in tRNA + (2E)-geranyl diphosphate = 5-methylaminomethyl-S-(2E)-geranyl-thiouridine(34) in tRNA + diphosphate. The enzyme catalyses 5-methylaminomethyl-S-(2E)-geranyl-thiouridine(34) in tRNA + selenophosphate + H(+) = 5-methylaminomethyl-2-(Se-phospho)selenouridine(34) in tRNA + (2E)-thiogeraniol. It carries out the reaction 5-methylaminomethyl-2-(Se-phospho)selenouridine(34) in tRNA + H2O = 5-methylaminomethyl-2-selenouridine(34) in tRNA + phosphate. Functionally, involved in the post-transcriptional modification of the uridine at the wobble position (U34) of tRNA(Lys), tRNA(Glu) and tRNA(Gln). Catalyzes the conversion of 2-thiouridine (S2U-RNA) to 2-selenouridine (Se2U-RNA). Acts in a two-step process involving geranylation of 2-thiouridine (S2U) to S-geranyl-2-thiouridine (geS2U) and subsequent selenation of the latter derivative to 2-selenouridine (Se2U) in the tRNA chain. This chain is tRNA 2-selenouridine synthase, found in Escherichia coli O6:H1 (strain CFT073 / ATCC 700928 / UPEC).